The primary structure comprises 179 residues: Large ribosomal subunit protein uL5 (179 aa).

Belongs to the universal ribosomal protein uL5 family. Part of the 50S ribosomal subunit; part of the 5S rRNA/L5/L18/L25 subcomplex. Contacts the 5S rRNA and the P site tRNA. Forms a bridge to the 30S subunit in the 70S ribosome.

Functionally, this is one of the proteins that bind and probably mediate the attachment of the 5S RNA into the large ribosomal subunit, where it forms part of the central protuberance. In the 70S ribosome it contacts protein S13 of the 30S subunit (bridge B1b), connecting the 2 subunits; this bridge is implicated in subunit movement. Contacts the P site tRNA; the 5S rRNA and some of its associated proteins might help stabilize positioning of ribosome-bound tRNAs. This chain is Large ribosomal subunit protein uL5, found in Buchnera aphidicola subsp. Acyrthosiphon kondoi (Acyrthosiphon kondoi symbiotic bacterium).